A 435-amino-acid polypeptide reads, in one-letter code: Phospholipase A1 EG1, chloroplastic/mitochondrial (435 aa).

The N-terminal 31 residues, 1-31 (MTLPRQCAAACRTGGGGGGVVRCRAVAAAGG), are a transit peptide targeting the chloroplast and mitochondrion. The GXSXG signature appears at 264–268 (GHSMG). The active-site Acyl-ester intermediate is S266. Active-site charge relay system residues include D324 and H371.

The protein belongs to the AB hydrolase superfamily. Lipase family.

The protein localises to the mitochondrion. Its subcellular location is the plastid. It localises to the chloroplast. The enzyme catalyses a 1,2-diacyl-sn-glycero-3-phosphocholine + H2O = a 2-acyl-sn-glycero-3-phosphocholine + a fatty acid + H(+). Functionally, phospholipase that releases free fatty acids from phospholipids. Catalyzes the initial step of jasmonate (JA) biosynthesis. Required for the biosynthesis of endogenous JA in seedling, inflorescence and spikelets. Not essential for JA biosynthesis after wounding. Mediates spikelet development and specification of empty-glume identity. Functions in a high temperature-dependent manner to maintain floral developmental robustness under heat stress conditions. Functions by safeguarding the expression of several floral identity genes, such as MADS1, MADS6 and G1. This Oryza sativa subsp. indica (Rice) protein is Phospholipase A1 EG1, chloroplastic/mitochondrial.